We begin with the raw amino-acid sequence, 219 residues long: Small ribosomal subunit protein uS3 (219 aa).

The region spanning 38–106 (IREYITARLK…RVHINILEVK (69 aa)) is the KH type-2 domain.

This sequence belongs to the universal ribosomal protein uS3 family. In terms of assembly, part of the 30S ribosomal subunit. Forms a tight complex with proteins S10 and S14.

Binds the lower part of the 30S subunit head. Binds mRNA in the 70S ribosome, positioning it for translation. The polypeptide is Small ribosomal subunit protein uS3 (Bacillus cytotoxicus (strain DSM 22905 / CIP 110041 / 391-98 / NVH 391-98)).